The chain runs to 306 residues: MSNWLVDKLIPSIMRSEVKKSSVPEGLWHKCPSCEAVLYRPELEKTLDVCPKCNHHMRIGARARLNIFLDVEGREELGADLEPVDRLKFRDGKKYKDRLTAAQKQTGEMDALISMSGTLLGMPVVASAFEFSFMGGSMGAIVGERFVRAANYALENRCPMICFAASGGARMQEALISLMQMAKTSAVLARLREEGLPFISVLTDPVYGGVSASLAMLGDVIVAEPKALIGFAGPRVIEQTVREKLPEGFQRSEFLLDHGAIDMIISRSELRPRLGNLLAQMMNLPTPRFVAPVIEPIVVPPAPATI.

In terms of domain architecture, CoA carboxyltransferase N-terminal spans 27–296 (LWHKCPSCEA…PRFVAPVIEP (270 aa)). The Zn(2+) site is built by C31, C34, C50, and C53. The C4-type zinc finger occupies 31–53 (CPSCEAVLYRPELEKTLDVCPKC).

This sequence belongs to the AccD/PCCB family. In terms of assembly, acetyl-CoA carboxylase is a heterohexamer composed of biotin carboxyl carrier protein (AccB), biotin carboxylase (AccC) and two subunits each of ACCase subunit alpha (AccA) and ACCase subunit beta (AccD). It depends on Zn(2+) as a cofactor.

Its subcellular location is the cytoplasm. The catalysed reaction is N(6)-carboxybiotinyl-L-lysyl-[protein] + acetyl-CoA = N(6)-biotinyl-L-lysyl-[protein] + malonyl-CoA. The protein operates within lipid metabolism; malonyl-CoA biosynthesis; malonyl-CoA from acetyl-CoA: step 1/1. Functionally, component of the acetyl coenzyme A carboxylase (ACC) complex. Biotin carboxylase (BC) catalyzes the carboxylation of biotin on its carrier protein (BCCP) and then the CO(2) group is transferred by the transcarboxylase to acetyl-CoA to form malonyl-CoA. In Pseudomonas savastanoi pv. phaseolicola (strain 1448A / Race 6) (Pseudomonas syringae pv. phaseolicola (strain 1448A / Race 6)), this protein is Acetyl-coenzyme A carboxylase carboxyl transferase subunit beta.